A 123-amino-acid polypeptide reads, in one-letter code: Protein TraJ (123 aa).

As to quaternary structure, monomer.

It is found in the cytoplasm. Transfer of plasmid RP4 during bacterial conjugation requires the plasmid-encoded TraJ protein, which binds to a 19-base pair invert sequence repetition within the transfer origin. TraJ protein is bound to only one side of the DNA helix. This nucleoprotein structure is the initial complex in the pathway to assemble a functional relaxosome. The chain is Protein TraJ (traJ) from Escherichia coli.